Here is a 173-residue protein sequence, read N- to C-terminus: Probable capsid assembly scaffolding protein (173 aa).

Residues 1-30 form a disordered region; it reads MSDTATTEGTPAGDPTPVVTDKPLEPTPKT. Positions 36–56 form a coiled coil; the sequence is VKELRQEAAAARVAKKDAVEA.

The protein belongs to the L5likevirus scaffolding protein family.

Its function is as follows. Scaffolding protein involved in the icosahedric procapsid assembly. Coassembles with the capsid proteins to form the procapsid, in which the scaffolding protein is found within the external shell of icosahedrally arranged capsid protein subunits. This chain is Probable capsid assembly scaffolding protein (16), found in Mycobacterium (Mycobacteriophage D29).